Consider the following 42-residue polypeptide: Large ribosomal subunit protein bL36 (42 aa).

This sequence belongs to the bacterial ribosomal protein bL36 family.

The protein is Large ribosomal subunit protein bL36 of Ehrlichia canis (strain Jake).